The chain runs to 129 residues: uncharacterized protein (129 aa).

This is an uncharacterized protein from Oryza sativa subsp. indica (Rice).